A 259-amino-acid polypeptide reads, in one-letter code: Global transcriptional regulator CodY (259 aa).

The interval Met-1–Leu-155 is GAF domain. The H-T-H motif DNA-binding region spans Ala-203–Arg-222. Ser-215 carries the phosphoserine modification.

The protein belongs to the CodY family.

The protein localises to the cytoplasm. In terms of biological role, DNA-binding global transcriptional regulator which is involved in the adaptive response to starvation and acts by directly or indirectly controlling the expression of numerous genes in response to nutrient availability. During rapid exponential growth, CodY is highly active and represses genes whose products allow adaptation to nutrient depletion. The chain is Global transcriptional regulator CodY from Bacillus licheniformis (strain ATCC 14580 / DSM 13 / JCM 2505 / CCUG 7422 / NBRC 12200 / NCIMB 9375 / NCTC 10341 / NRRL NRS-1264 / Gibson 46).